The sequence spans 424 residues: MAKQIQAIRGMNDILPTQSPLWQKLETVLRETVAAYGYSEIRTPIVESTDLFKRSIGEVTDIVEKEMYTFDDRNGDSLTLRPEGTASTVRAGNEHGLLYNQEQRLWYMGPMFRHERPQKGRYRQFNQFGVEVYGIGTADVDAEVLMLSARLWEKLGIKEHVTLELNTLGDPAERATYRSALIEFLEQFKEQLDEESQRRMYTNPLRVLDTKNPEVQALLVDAPELMDFLGEESRAHFSHLCELLDAVGIQYVINPRLVRGLDYYNRTVFEWVTSSLGSQGTVLAGGRYDGLVEQLGGKDTPAVGFAMGLERIVLLLETLELTSDIPSTVDVYVTAMGDTSKIEAIKIAQTLRSELPNLRVMSHCGGGNFKKQMKRADKSGAQIALVIGEDELANNQVAVKYLREKKEQELVARDGLATYIAKQI.

It belongs to the class-II aminoacyl-tRNA synthetase family. Homodimer.

The protein resides in the cytoplasm. It carries out the reaction tRNA(His) + L-histidine + ATP = L-histidyl-tRNA(His) + AMP + diphosphate + H(+). The sequence is that of Histidine--tRNA ligase from Shewanella woodyi (strain ATCC 51908 / MS32).